A 1204-amino-acid polypeptide reads, in one-letter code: MGDAKEAGAEGPPAGAAAREGLSLLSQAESEESSAQGSALFLGGNEVKSRAVVKYSSAPPRTAFARLEEKTDLKLPPANWLRESAKLGPAGTTILGNSKKSKPFSSFGMAYDFIDSVGNDVDVVSDSENIKKLLKIPYSKSHVSMAVHRIGRTLLLDELDIQELFMRSSQTGDWTWLKEFYQRLIDQKWQRKKKSKEHWYQKAILSKFLYYSINGDGAAQPVSSTTEQQESSSSDQTNDSEGASWPAPFEMPSSVSEDPSASSQGLKNDFVRNILWTFEDIHMLVGSNMPIFGGGRYPAVSLRLRDNNKPINVLTGIDYWLDNLICNVPELVMCFHVNGIVQKYEMIKTEEIPNLENSNFSTKVIKDIAQNILSFLKSNCTKEGHTYWLFKASGSDIVKLYDLTTLCEETEDKYQNPFTMPVAILLYKVACNMMMKKNQNKKHYGTIRTLLLNCLKLLDKSRHPQIIASANYMLSELFQLDEPKKEENSESPLNENSDESYSEEEEEMPDSDENGSYSTSSDPSDDSNAVAIIKSVGELSVPEKYKSIHQIRPSCAFPVCHDTEERCRLVLSYVLEGLKSVDSSIKKESDLPAADPSTPIPLKYEDESSRGGPEGLEKQMALFLDKMGSLQKGNYSSQSGMIPGSWQHKMKLQLILKSSKAYYVLSDAAMSLQKYGRALRYIKLALQSHDTYCCLCTNMLSEVLLFLSQYLTLCGDIQLMLAQNANNRAAHLEEFHYRTKEDQEILHSLHRESSCQGFAWATDLSTDLESQLSVSCKCYEATNEILQFSDLKSQNPEHYVQVLKRMGNIRNEIGVFYMNQAAALQSERVVSKSVSAAEQQLWKKSFSCFEKGIHNFESIEDATNAALLLCNTGRLMRICAQAHCGAGDEFKREFSPEEGLYYNKAIDYYLKALRSLGTRDIHPAVWDSVNWELSTTYFTMATLQQDYAPLSRKAQEQIEKEVSEAMMKSLKYCDVDSVSARQPLCQYRAATIHHRLASMYHSCLRNQLGDEHLRKQHRVLADLHYSKAAKLFQLLKDAPCELLRVQLERVAFAEFQMTSQNSNVGKLKTLSGALNIMVRTEHAFQLIQKELIEELGQPKSGDAAVAADASPSLNREEVMKLLSIFESRLSFLLLQSIKLLSSTKKKTSNNIEDDAVLKTNKHIYSQLLRATANKTATLLERINVIIHLLGQLAAGSAASSNAVQ.

Disordered stretches follow at residues 1 to 30, 220 to 264, 483 to 527, and 586 to 613; these read MGDAKEAGAEGPPAGAAAREGLSLLSQAES, QPVS…ASSQ, PKKE…SDDS, and KKESDLPAADPSTPIPLKYEDESSRGGP. 3 stretches are compositionally biased toward low complexity: residues 9-30, 223-241, and 253-263; these read AEGPPAGAAAREGLSLLSQAES, SSTTEQQESSSSDQTNDSE, and SSVSEDPSASS. The span at 496–513 shows a compositional bias: acidic residues; it reads NSDESYSEEEEEMPDSDE. 2 TPR repeats span residues 693 to 726 and 920 to 953; these read CCLCTNMLSEVLLFLSQYLTLCGDIQLMLAQNAN and DIHPAVWDSVNWELSTTYFTMATLQQDYAPLSRK.

The protein resides in the nucleus. Its function is as follows. Transcription factor involved in erythroid differentiation. Involved in transcriptional activation of the globin gene. The chain is Erythroid differentiation-related factor 1 (EDRF1) from Pongo abelii (Sumatran orangutan).